A 217-amino-acid polypeptide reads, in one-letter code: Ribosomal RNA large subunit methyltransferase E (217 aa).

S-adenosyl-L-methionine contacts are provided by Gly-64, Trp-66, Asp-92, Asp-108, and Asp-133. Lys-173 (proton acceptor) is an active-site residue.

The protein belongs to the class I-like SAM-binding methyltransferase superfamily. RNA methyltransferase RlmE family.

The protein localises to the cytoplasm. The catalysed reaction is uridine(2552) in 23S rRNA + S-adenosyl-L-methionine = 2'-O-methyluridine(2552) in 23S rRNA + S-adenosyl-L-homocysteine + H(+). Its function is as follows. Specifically methylates the uridine in position 2552 of 23S rRNA at the 2'-O position of the ribose in the fully assembled 50S ribosomal subunit. In Delftia acidovorans (strain DSM 14801 / SPH-1), this protein is Ribosomal RNA large subunit methyltransferase E.